A 405-amino-acid chain; its full sequence is MQYSEIMVRYGELSTKGKNRQAFIGRLNGNVTRALHEFPRLTIRPKRDRMHIELNGEPSDQVMARLSQVFGIQNFSPSIAVEKDMDKVHAVALQLMNETAPKGISYKVNTRRSDHDFALDTNAMNLDLGDYLTDKRPDLVVKMHQPDMILRVEVRREAIYLSTKTIQGAGGLPVGTAGKAALMLSGGIDSPVAGYYALKRGVDIEMVHFFSPPYTSQQALNKAKQLTAKLTPYVGRIYFIEVPFTEIQEEIKAKVPEGYLMTVQRRLMLRLTEAIAQQRGDLAIFNGESVGQVASQTLESMAAINDVTTMPIIRPVATMDKNEIIAEAEKIDTYDLSIMPFEDCCTIFAPPSPKTRPKTDRARYYESKIDVAGLMDRALAGVKIQEIKSSDQFMNQDQDVIAELL.

The THUMP domain occupies 60 to 165 (DQVMARLSQV…REAIYLSTKT (106 aa)). ATP contacts are provided by residues 183-184 (ML), 208-209 (HF), Arg-265, Gly-287, and Gln-296.

Belongs to the ThiI family.

The protein resides in the cytoplasm. It catalyses the reaction [ThiI sulfur-carrier protein]-S-sulfanyl-L-cysteine + a uridine in tRNA + 2 reduced [2Fe-2S]-[ferredoxin] + ATP + H(+) = [ThiI sulfur-carrier protein]-L-cysteine + a 4-thiouridine in tRNA + 2 oxidized [2Fe-2S]-[ferredoxin] + AMP + diphosphate. The enzyme catalyses [ThiS sulfur-carrier protein]-C-terminal Gly-Gly-AMP + S-sulfanyl-L-cysteinyl-[cysteine desulfurase] + AH2 = [ThiS sulfur-carrier protein]-C-terminal-Gly-aminoethanethioate + L-cysteinyl-[cysteine desulfurase] + A + AMP + 2 H(+). The protein operates within cofactor biosynthesis; thiamine diphosphate biosynthesis. Functionally, catalyzes the ATP-dependent transfer of a sulfur to tRNA to produce 4-thiouridine in position 8 of tRNAs, which functions as a near-UV photosensor. Also catalyzes the transfer of sulfur to the sulfur carrier protein ThiS, forming ThiS-thiocarboxylate. This is a step in the synthesis of thiazole, in the thiamine biosynthesis pathway. The sulfur is donated as persulfide by IscS. This chain is Probable tRNA sulfurtransferase, found in Lacticaseibacillus casei (strain BL23) (Lactobacillus casei).